Consider the following 195-residue polypeptide: PBAN-type neuropeptides (195 aa).

Residues 1-33 (MIGFAVFSSFNRFTTIFVCVLLCVVYLLSYASG) form the signal peptide. A propeptide spanning residues 34-63 (EYDGRDSSSGSNNDRAPSNEFGSCTDGKCI) is cleaved from the precursor. Leu80 carries the leucine amide modification. A propeptide spanning residues 86-117 (ADRKPEINSDIEAFANAFEEPHWAIVTIPETE) is cleaved from the precursor. Gln120 is modified (pyrrolidone carboxylic acid). Leu128 is subject to Leucine amide. Positions 131–153 (ESGEDYFSYGFPKDQEELYTEEQ) are excised as a propeptide. Leu163 and Leu175 each carry leucine amide. Residues 178–195 (QLHNIVDKPRQNFNDPRF) constitute a propeptide that is removed on maturation.

This sequence belongs to the pyrokinin family.

It localises to the secreted. In terms of biological role, a hormone that controls sex pheromone production in females and pheromone responsiveness in male. Also mediates visceral muscle contractile activity (myotropic activity). The chain is PBAN-type neuropeptides from Apis mellifera (Honeybee).